A 525-amino-acid chain; its full sequence is MTEQIKVSEVSSILRQQLEGIHTSIKLEEVGTVLQVSDGVARIYGLDNAEANELLQFDNGMEAIVMNLEEDNVGAVLLGPTDQIKEGDTVKRTGRIASIDVSEGMIGRVIDPLGNPIDGKGEILGETCEMPLERKAPGVIFRQPVNEPLQTGIKAVDAMIPIGRGQRELIIGDRQTGKTSIAIDTIINQRSNYEAGNPVYCIYVAIGQKGSTVAALVNTLQEKGAMDYTIVVSATASDPAAMQYFAPFAGAAIGEYFRDSGRHALVVYDDLSKQAVAYREVSLILRRPSGREAYPGDIFYLHSRLLERAAKIINQPEVAREMNDLPESMRDKVKGGGSLTALPIIETQAGDVSAYIPTNVISITDGQIFLETDLFNQGNRPAINVGISVSRVGGNAQLKAMKKVAGTLKIDQAQFRELESFSKFGGEMDAVTAFTIDKGQKNTQLLIQPQYSPMPVEEQISILYCGTQGLLKEVPLDKVHEFEARFLQELRTSHQRDVLDVLKTGVINDEIRGILEKTAKELWVH.

An ATP-binding site is contributed by 172 to 179 (GDRQTGKT).

The protein belongs to the ATPase alpha/beta chains family. F-type ATPases have 2 components, CF(1) - the catalytic core - and CF(0) - the membrane proton channel. CF(1) has five subunits: alpha(3), beta(3), gamma(1), delta(1), epsilon(1). CF(0) has three main subunits: a(1), b(2) and c(9-12). The alpha and beta chains form an alternating ring which encloses part of the gamma chain. CF(1) is attached to CF(0) by a central stalk formed by the gamma and epsilon chains, while a peripheral stalk is formed by the delta and b chains.

Its subcellular location is the cell inner membrane. The enzyme catalyses ATP + H2O + 4 H(+)(in) = ADP + phosphate + 5 H(+)(out). Functionally, produces ATP from ADP in the presence of a proton gradient across the membrane. The alpha chain is a regulatory subunit. The sequence is that of ATP synthase subunit alpha from Parabacteroides distasonis (strain ATCC 8503 / DSM 20701 / CIP 104284 / JCM 5825 / NCTC 11152).